The sequence spans 468 residues: Siroheme synthase 3 (468 aa).

Positions 1–204 (MDYLPIFCRL…GDSASANQLA (204 aa)) are precorrin-2 dehydrogenase /sirohydrochlorin ferrochelatase. Residues 22–23 (EV) and 43–44 (PE) contribute to the NAD(+) site. Serine 128 bears the Phosphoserine mark. Residues 216-468 (GEVVLVGAGP…GAADAALASA (253 aa)) form a uroporphyrinogen-III C-methyltransferase region. S-adenosyl-L-methionine is bound at residue proline 225. The active-site Proton acceptor is aspartate 248. Lysine 270 functions as the Proton donor in the catalytic mechanism. Residues 301–303 (GGD), isoleucine 306, 331–332 (TA), methionine 383, and glycine 412 each bind S-adenosyl-L-methionine.

In the N-terminal section; belongs to the precorrin-2 dehydrogenase / sirohydrochlorin ferrochelatase family. It in the C-terminal section; belongs to the precorrin methyltransferase family.

It catalyses the reaction uroporphyrinogen III + 2 S-adenosyl-L-methionine = precorrin-2 + 2 S-adenosyl-L-homocysteine + H(+). The enzyme catalyses precorrin-2 + NAD(+) = sirohydrochlorin + NADH + 2 H(+). The catalysed reaction is siroheme + 2 H(+) = sirohydrochlorin + Fe(2+). It functions in the pathway cofactor biosynthesis; adenosylcobalamin biosynthesis; precorrin-2 from uroporphyrinogen III: step 1/1. Its pathway is cofactor biosynthesis; adenosylcobalamin biosynthesis; sirohydrochlorin from precorrin-2: step 1/1. The protein operates within porphyrin-containing compound metabolism; siroheme biosynthesis; precorrin-2 from uroporphyrinogen III: step 1/1. It participates in porphyrin-containing compound metabolism; siroheme biosynthesis; siroheme from sirohydrochlorin: step 1/1. It functions in the pathway porphyrin-containing compound metabolism; siroheme biosynthesis; sirohydrochlorin from precorrin-2: step 1/1. In terms of biological role, multifunctional enzyme that catalyzes the SAM-dependent methylations of uroporphyrinogen III at position C-2 and C-7 to form precorrin-2 via precorrin-1. Then it catalyzes the NAD-dependent ring dehydrogenation of precorrin-2 to yield sirohydrochlorin. Finally, it catalyzes the ferrochelation of sirohydrochlorin to yield siroheme. The polypeptide is Siroheme synthase 3 (Aeromonas hydrophila subsp. hydrophila (strain ATCC 7966 / DSM 30187 / BCRC 13018 / CCUG 14551 / JCM 1027 / KCTC 2358 / NCIMB 9240 / NCTC 8049)).